The chain runs to 366 residues: Molybdenum import ATP-binding protein ModC (366 aa).

In terms of domain architecture, ABC transporter spans 1-231 (MSEVILQLQK…KAMRPWQSFS (231 aa)). Residue 33 to 40 (GRSGAGKT) participates in ATP binding. The region spanning 292-361 (ASSIRNILPA…IKGVSVAQRD (70 aa)) is the Mop domain.

Belongs to the ABC transporter superfamily. Molybdate importer (TC 3.A.1.8) family. As to quaternary structure, the complex is composed of two ATP-binding proteins (ModC), two transmembrane proteins (ModB) and a solute-binding protein (ModA).

Its subcellular location is the cell inner membrane. It catalyses the reaction molybdate(out) + ATP + H2O = molybdate(in) + ADP + phosphate + H(+). Part of the ABC transporter complex ModABC involved in molybdenum import. Responsible for energy coupling to the transport system. The chain is Molybdenum import ATP-binding protein ModC from Vibrio cholerae serotype O1 (strain ATCC 39315 / El Tor Inaba N16961).